Consider the following 76-residue polypeptide: UPF0154 protein Sca_0984 (76 aa).

The helical transmembrane segment at 4 to 24 threads the bilayer; that stretch reads WLAILLIVAALIIGLVGGFFL.

It belongs to the UPF0154 family.

The protein resides in the cell membrane. This Staphylococcus carnosus (strain TM300) protein is UPF0154 protein Sca_0984.